Here is a 259-residue protein sequence, read N- to C-terminus: Haloacid dehalogenase-like hydrolase domain-containing protein 2 (259 aa).

Mg(2+)-binding residues include D13 and S15. Residues 13–15 (DLS) and 46–47 (TN) contribute to the substrate site. A coiled-coil region spans residues 47 to 71 (NTTKESKQDLLERLKKLEFDISEDE). Position 50 is an N6-succinyllysine (K50). K179 is a binding site for substrate. D204 contacts Mg(2+).

Belongs to the HAD-like hydrolase superfamily. It depends on Mg(2+) as a cofactor.

This is Haloacid dehalogenase-like hydrolase domain-containing protein 2 (HDHD2) from Bos taurus (Bovine).